The chain runs to 386 residues: MDIGKMINDDNGSDSRRTSVKSLLNSPPTGLPSSDDRPDSKASSTSDLAQQLTNEMESGEDDDDEDAAAAVNHKPRRYSRPPIWATKWQGTGRHAERDHRPPPHRQDRRDPRMERQSGGSRALPASSTTTITGCPPSISGIKPFESVTRTVTSWLHAHLSTMSPEQLQTVELEAKIGTIQHKKAGADRARLDLPIVTEAVVNQQYVQAQCSFSSQLPESLLEEAKRILDAADPKFIKSTEHTIHRDEIYEGQQDKGNLRITRDDVTGRQVAKIRKKAIAHIMIHCPTDPFDIRLSLATESPTDDVPQGVCRTRRKDRISYLYDGFRADLTKVSGSSMSSELEMEADSHKLIGYFTDRNDPHNMDKVEELLQILLDSMRYVNRRLKA.

Residues Met-1 to Ser-137 are disordered. 2 stretches are compositionally biased toward polar residues: residues Val-20 to Pro-32 and Lys-41 to Met-56. The span at Glu-57–Ala-67 shows a compositional bias: acidic residues. Residues Arg-93–Arg-115 are compositionally biased toward basic and acidic residues.

It belongs to the fungal TPase family. As to quaternary structure, heterodimer. The mRNA-capping enzyme is composed of two separate chains alpha and beta, respectively a mRNA guanylyltransferase and an mRNA 5'-triphosphate monophosphatase. It depends on Mg(2+) as a cofactor.

The protein resides in the nucleus. The enzyme catalyses a 5'-end triphospho-ribonucleoside in mRNA + H2O = a 5'-end diphospho-ribonucleoside in mRNA + phosphate + H(+). In terms of biological role, first step of mRNA capping. Converts the 5'-triphosphate end of a nascent mRNA chain into a diphosphate end. This Yarrowia lipolytica (strain CLIB 122 / E 150) (Yeast) protein is mRNA-capping enzyme subunit beta (CET1).